We begin with the raw amino-acid sequence, 484 residues long: Aldehyde dehydrogenase family 3 member A2 (484 aa).

The Cytoplasmic portion of the chain corresponds to 1–463 (MERQVQRLRQ…FLLKQFNKGR (463 aa)). Residue 185–190 (GNTAVG) participates in NAD(+) binding. Catalysis depends on residues Glu207 and Cys241. At Ser293 the chain carries Phosphoserine. The chain crosses the membrane as a helical span at residues 464 to 484 (LQLLLLVCLVAVAAVIVKDQL). Residues 481 to 484 (KDQL) carry the Prevents secretion from ER motif.

This sequence belongs to the aldehyde dehydrogenase family. As to quaternary structure, homodimer. The N-terminus is blocked.

It is found in the microsome membrane. Its subcellular location is the endoplasmic reticulum membrane. It carries out the reaction an aldehyde + NAD(+) + H2O = a carboxylate + NADH + 2 H(+). It catalyses the reaction a fatty aldehyde + NAD(+) + H2O = a fatty acid + NADH + 2 H(+). The catalysed reaction is (2E)-hexadecenal + NAD(+) + H2O = (E)-hexadec-2-enoate + NADH + 2 H(+). The enzyme catalyses hexadecanoate + NADH + 2 H(+) = hexadecanal + NAD(+) + H2O. It carries out the reaction 22-oxodocosanoate + NAD(+) + H2O = docosanedioate + NADH + 2 H(+). It catalyses the reaction 2,6,10,14-tetramethylpentadecanal + NAD(+) + H2O = 2,6,10,14-tetramethylpentadecanoate + NADH + 2 H(+). The catalysed reaction is octadecanal + NAD(+) + H2O = octadecanoate + NADH + 2 H(+). The enzyme catalyses dodecanoate + NADH + 2 H(+) = dodecanal + NAD(+) + H2O. It carries out the reaction decanal + NAD(+) + H2O = decanoate + NADH + 2 H(+). It catalyses the reaction tetradecanal + NAD(+) + H2O = tetradecanoate + NADH + 2 H(+). The catalysed reaction is octanal + NAD(+) + H2O = octanoate + NADH + 2 H(+). The enzyme catalyses heptanal + NAD(+) + H2O = heptanoate + NADH + 2 H(+). It carries out the reaction (2E,6E)-farnesal + NAD(+) + H2O = (2E,6E)-farnesoate + NADH + 2 H(+). Functionally, catalyzes the oxidation of medium and long-chain aliphatic aldehydes to fatty acids. Active on a variety of saturated and unsaturated aliphatic aldehydes between 6 and 24 carbons in length. Responsible for conversion of the sphingosine 1-phosphate (S1P) degradation product hexadecenal to hexadecenoic acid. This chain is Aldehyde dehydrogenase family 3 member A2 (Aldh3a2), found in Rattus norvegicus (Rat).